A 548-amino-acid chain; its full sequence is Adenine deaminase (548 aa).

It belongs to the metallo-dependent hydrolases superfamily. Adenine deaminase family. The cofactor is Mn(2+).

The enzyme catalyses adenine + H2O + H(+) = hypoxanthine + NH4(+). This is Adenine deaminase from Borreliella burgdorferi (strain ATCC 35210 / DSM 4680 / CIP 102532 / B31) (Borrelia burgdorferi).